Here is a 280-residue protein sequence, read N- to C-terminus: Energy-coupling factor transporter ATP-binding protein EcfA1 (280 aa).

Residues 6 to 241 (LRTENISFQY…SHMLQEIGLD (236 aa)) form the ABC transporter domain. Position 40–47 (40–47 (GQNGSGKS)) interacts with ATP.

The protein belongs to the ABC transporter superfamily. Energy-coupling factor EcfA family. Forms a stable energy-coupling factor (ECF) transporter complex composed of 2 membrane-embedded substrate-binding proteins (S component), 2 ATP-binding proteins (A component) and 2 transmembrane proteins (T component).

Its subcellular location is the cell membrane. ATP-binding (A) component of a common energy-coupling factor (ECF) ABC-transporter complex. Unlike classic ABC transporters this ECF transporter provides the energy necessary to transport a number of different substrates. In Bacillus cereus (strain ATCC 10987 / NRS 248), this protein is Energy-coupling factor transporter ATP-binding protein EcfA1.